The chain runs to 201 residues: Ribonuclease HII (201 aa).

Residues 10-200 enclose the RNase H type-2 domain; sequence LIEAGCDEAG…LGDGQLELFS (191 aa). The a divalent metal cation site is built by D16, E17, and D108.

Belongs to the RNase HII family. It depends on Mn(2+) as a cofactor. The cofactor is Mg(2+).

The protein resides in the cytoplasm. It catalyses the reaction Endonucleolytic cleavage to 5'-phosphomonoester.. In terms of biological role, endonuclease that specifically degrades the RNA of RNA-DNA hybrids. The chain is Ribonuclease HII from Bacteroides fragilis (strain YCH46).